Reading from the N-terminus, the 379-residue chain is Topoisomerase I damage affected protein 11 (379 aa).

Residues 1-16 (MSKLDGFIEEHDRESN) show a composition bias toward basic and acidic residues. 4 disordered regions span residues 1–133 (MSKL…QLAD), 197–235 (EQIQ…AKKE), 263–313 (DDVA…DVLG), and 332–379 (GINE…SKRQ). Positions 39 to 54 (VRQNGVKSPILQTQAT) are enriched in polar residues. The segment covering 59–69 (SEQEHPLKETP) has biased composition (basic and acidic residues). Low complexity-rich tracts occupy residues 114-128 (RSVV…SSAS) and 200-209 (QQQSQSSHHS). Residues 125–190 (SSASEQLADA…QDLKTQVGKA (66 aa)) adopt a coiled-coil conformation. Over residues 211–225 (NQRSLAVPTSHTPGN) the composition is skewed to polar residues. 2 stretches are compositionally biased toward low complexity: residues 283–305 (SASP…SNRG) and 343–353 (EAPAVASSGES). The segment covering 354 to 365 (NNQLRFVGSKNN) has biased composition (polar residues). The span at 366-379 (SEVELKEYNASKRQ) shows a compositional bias: basic and acidic residues.

It belongs to the TDA11 family.

The protein resides in the cytoplasm. The chain is Topoisomerase I damage affected protein 11 (TDA11) from Lachancea thermotolerans (strain ATCC 56472 / CBS 6340 / NRRL Y-8284) (Yeast).